The primary structure comprises 302 residues: Methionyl-tRNA formyltransferase (302 aa).

108–111 provides a ligand contact to (6S)-5,6,7,8-tetrahydrofolate; it reads SILP.

This sequence belongs to the Fmt family.

The catalysed reaction is L-methionyl-tRNA(fMet) + (6R)-10-formyltetrahydrofolate = N-formyl-L-methionyl-tRNA(fMet) + (6S)-5,6,7,8-tetrahydrofolate + H(+). Its function is as follows. Attaches a formyl group to the free amino group of methionyl-tRNA(fMet). The formyl group appears to play a dual role in the initiator identity of N-formylmethionyl-tRNA by promoting its recognition by IF2 and preventing the misappropriation of this tRNA by the elongation apparatus. The protein is Methionyl-tRNA formyltransferase of Sulfurimonas denitrificans (strain ATCC 33889 / DSM 1251) (Thiomicrospira denitrificans (strain ATCC 33889 / DSM 1251)).